Reading from the N-terminus, the 272-residue chain is Insulin-like growth factor-binding protein 1 (272 aa).

The first 25 residues, 1–25 (MPEFLTVVSWPFLILLSFQIGVAAG), serve as a signal peptide directing secretion. Residues 28–109 (QPWHCAPCTA…TRGQGACVPE (82 aa)) enclose the IGFBP N-terminal domain. Intrachain disulfides connect C32/C59, C35/C61, C43/C62, C50/C65, C73/C86, and C80/C106. Residues S139, S157, and S169 each carry the phosphoserine modification. At T170 the chain carries Phosphothreonine. Y171 carries the post-translational modification Phosphotyrosine. One can recognise a Thyroglobulin type-1 domain in the interval 186–264 (KEPCQRELYK…SLETRGDPNC (79 aa)). Intrachain disulfides connect C189-C219, C230-C241, and C243-C264. Residue S255 is modified to Phosphoserine. The short motif at 259-261 (RGD) is the Cell attachment site element.

In terms of assembly, binds equally well IGF1 and IGF2. Interacts with integrin ITGA5:ITGB1. Interacts with VHL; this interaction inhibits HIF1A degradation.

It localises to the secreted. Its function is as follows. Multifunctional protein that plays a critical role in regulating the availability of IGFs such as IGF1 and IGF2 to their receptors and thereby regulates IGF-mediated cellular processes including cell migration, proliferation, differentiation or apoptosis in a cell-type specific manner. Also plays a positive role in cell migration by interacting with integrin ITGA5:ITGB1 through its RGD motif. Mechanistically, binding to integrins leads to activation of focal adhesion kinase/PTK2 and stimulation of the mitogen-activated protein kinase (MAPK) pathway. Regulates cardiomyocyte apoptosis by suppressing HIF-1alpha/HIF1A ubiquitination and subsequent degradation. The sequence is that of Insulin-like growth factor-binding protein 1 (Igfbp1) from Mus musculus (Mouse).